The sequence spans 384 residues: S-adenosylmethionine synthase (384 aa).

His-15 is an ATP binding site. Residue Asp-17 participates in Mg(2+) binding. Glu-43 lines the K(+) pocket. 2 residues coordinate L-methionine: Glu-56 and Gln-99. The flexible loop stretch occupies residues 99 to 109; the sequence is QSADINQGVDR. ATP contacts are provided by residues 164–166, 230–231, Asp-239, 245–246, Ala-262, and Lys-266; these read DAK, RF, and RK. Residue Asp-239 coordinates L-methionine. Lys-270 is a binding site for L-methionine.

This sequence belongs to the AdoMet synthase family. In terms of assembly, homotetramer; dimer of dimers. Mg(2+) serves as cofactor. Requires K(+) as cofactor.

The protein resides in the cytoplasm. The enzyme catalyses L-methionine + ATP + H2O = S-adenosyl-L-methionine + phosphate + diphosphate. It functions in the pathway amino-acid biosynthesis; S-adenosyl-L-methionine biosynthesis; S-adenosyl-L-methionine from L-methionine: step 1/1. Its function is as follows. Catalyzes the formation of S-adenosylmethionine (AdoMet) from methionine and ATP. The overall synthetic reaction is composed of two sequential steps, AdoMet formation and the subsequent tripolyphosphate hydrolysis which occurs prior to release of AdoMet from the enzyme. The polypeptide is S-adenosylmethionine synthase (Haemophilus influenzae (strain 86-028NP)).